A 400-amino-acid polypeptide reads, in one-letter code: MSVIYLDNNATTKVDPEVVEAIMPYLTDYYGNPSSMHTFGGQLGKAVRTAREQVAALLGADESEIVFTSCGTEGDNAAIRAALLAQPEKRHIITTQVEHPAVLNVCKQLETQGYTVTYLSVNGHGQLDLDELEASLTGNTALVTIMYANNETGTVFPIEEIGKRVKERGAIFHVDAVQAVGKIPLNMKTSTIDMLTISGHKIHAPKGIGALYVRRGVRFRPLLIGGHQERGRRAGTENVPGIVGLGKAAELELIHIETAIKKETRLRDRLEQTLLAKIPDCEVNGDVTQRLPNTTNIGFKYIEGEAILLSLNKYGICASSGSACTSGSLEPSHVLRAMGLPYTTLHGSIRFSLCRYTTEAQIDRVIEVMPEIVERLRALSPFKNDEAGWLQAQEQTLAHR.

Residues glycine 71–threonine 72, asparagine 150, glutamine 178, and serine 198–histidine 200 contribute to the pyridoxal 5'-phosphate site. Lysine 201 is modified (N6-(pyridoxal phosphate)lysine). Threonine 236 is a binding site for pyridoxal 5'-phosphate. Cysteine 324 acts as the Cysteine persulfide intermediate in catalysis. Cysteine 324 lines the [2Fe-2S] cluster pocket.

The protein belongs to the class-V pyridoxal-phosphate-dependent aminotransferase family. NifS/IscS subfamily. Homodimer. Pyridoxal 5'-phosphate is required as a cofactor.

The catalysed reaction is (sulfur carrier)-H + L-cysteine = (sulfur carrier)-SH + L-alanine. In terms of biological role, catalyzes the removal of elemental sulfur atoms from cysteine to produce alanine. Seems to participate in the biosynthesis of the nitrogenase metalloclusters by providing the inorganic sulfur required for the Fe-S core formation. This Trichormus variabilis (strain ATCC 29413 / PCC 7937) (Anabaena variabilis) protein is Cysteine desulfurase 1.